The following is a 205-amino-acid chain: Nitrophorin-7 (205 aa).

The signal sequence occupies residues 1–20 (MELYTALLAVTILSPSSIVG). Cystine bridges form between Cys25–Cys144 and Cys62–Cys193. Position 52 (Asp52) interacts with histamine. Heme-binding residues include His80 and Asn91. Asp154 contacts histamine.

It belongs to the calycin superfamily. Nitrophorin family. In terms of assembly, forms oligomers (at pH 5.5). Heme b is required as a cofactor. As to expression, expressed in the endothelial cells of the salivary glands.

Its subcellular location is the secreted. The enzyme catalyses 3 nitrite + 2 H(+) = 2 nitric oxide + nitrate + H2O. Converts nitrite as the sole substrate to form nitric oxide gas (NO). NO(2-) serves both as an electron donor and as an electron acceptor. Binds to negatively charged cell surfaces of activated platelets; binds to L-a-phosphatidyl-L-serine (PS)-bearing phospholipid membranes. Once bound on an activated platelet, NP7 releases its stored nitric oxide gas (NO) into the victim's tissues while feeding, resulting in vasodilation and inhibition of platelet aggregation. Also acts as an anticoagulant by blocking coagulation-factor binding sites. Has antihistamine activity; binds histamine with high affinity. The chain is Nitrophorin-7 from Rhodnius prolixus (Triatomid bug).